Here is a 103-residue protein sequence, read N- to C-terminus: UPF0473 protein SSA_2239 (103 aa).

The protein belongs to the UPF0473 family.

This Streptococcus sanguinis (strain SK36) protein is UPF0473 protein SSA_2239.